The sequence spans 513 residues: L-aspartate oxidase (513 aa).

FAD-binding positions include 17–20 (AGIA) and 46–53 (SSILAQGG). Arginine 278 acts as the Proton donor/acceptor in catalysis. Residues glutamate 361 and 377–378 (SL) each bind FAD.

Belongs to the FAD-dependent oxidoreductase 2 family. NadB subfamily. FAD serves as cofactor.

It localises to the cytoplasm. It carries out the reaction L-aspartate + O2 = iminosuccinate + H2O2. The protein operates within cofactor biosynthesis; NAD(+) biosynthesis; iminoaspartate from L-aspartate (oxidase route): step 1/1. In terms of biological role, catalyzes the oxidation of L-aspartate to iminoaspartate, the first step in the de novo biosynthesis of NAD(+). The chain is L-aspartate oxidase (nadB) from Mesorhizobium japonicum (strain LMG 29417 / CECT 9101 / MAFF 303099) (Mesorhizobium loti (strain MAFF 303099)).